Reading from the N-terminus, the 166-residue chain is Large ribosomal subunit protein uL10 (166 aa).

This sequence belongs to the universal ribosomal protein uL10 family. Part of the ribosomal stalk of the 50S ribosomal subunit. The N-terminus interacts with L11 and the large rRNA to form the base of the stalk. The C-terminus forms an elongated spine to which L12 dimers bind in a sequential fashion forming a multimeric L10(L12)X complex.

Functionally, forms part of the ribosomal stalk, playing a central role in the interaction of the ribosome with GTP-bound translation factors. The chain is Large ribosomal subunit protein uL10 from Streptococcus pneumoniae serotype 19F (strain G54).